The primary structure comprises 386 residues: MSYDDHAVLEAILRCAGGDERFLLNTVEEWGAAEITAALVDELLFRCEIPQVGGEAFIGLDVLHGADRISHVLQVTDGKPVTSAEPAGQELGGRTWSSRSATLLRELFGPPSGRTAGGFGVSFLPDLRGPRTMEGAALAARATNVVLHATTNETPPLDRLALRYESDKWGGVHWFTGHYDRHLRAVRDQAVRILEIGIGGYDDLLPSGASLKMWKRYFPRGLVFGVDIFDSRRATSRVSRRSAARQDDPEFMRRVAEEHGPFDVIIDDGSHINAHMRTSFSVMFPHLRNGGFYVIEDTFTSYWPGYGGPSGARCPSGTTALEMVKGLIDSVHYEERPDGAATADYIARNLVGLHAYQTTSSSSRRAINKEGGIPHTVPREPFWNDN.

S-adenosyl-L-methionine is bound by residues Ser-166, 195–201 (EIGIGGY), Ser-210, Asp-227, 245–246 (RQ), and Asp-268. Asp-268 lines the Mg(2+) pocket. His-271 (proton acceptor) is an active-site residue. 2 residues coordinate Mg(2+): Glu-296 and Asp-297. Residues 364–386 (RRAINKEGGIPHTVPREPFWNDN) form a disordered region.

It belongs to the methyltransferase OleY/MycE family. Homodimer. It depends on Mg(2+) as a cofactor.

The catalysed reaction is L-olivosyl-oleandolide + S-adenosyl-L-methionine = L-oleandrosyl-oleandolide + S-adenosyl-L-homocysteine + H(+). It functions in the pathway antibiotic biosynthesis. Functionally, 3-O-methyltransferase involved in the synthesis of L-oleandrose, a sugar attached to oleandomycin, a macrolide antibiotic. Acts on monoglycosylated macrolactones and mediates the conversion of L-olivosyl-erythronolide B into its 3-O-methylated derivative, L-oleandrosyl-erythronolide B. Also able to methylate other monoglycosylated derivatives, such as L-rhamnosyl- and L-mycarosyl-erythronolide B. The chain is L-olivosyl-oleandolide 3-O-methyltransferase (oleY) from Streptomyces antibioticus.